A 401-amino-acid chain; its full sequence is Patatin-like protein 4 (401 aa).

A PNPLA domain is found at 17 to 218; that stretch reads LSLDGGGVRG…TANDPTLVGM (202 aa). A GXGXXG motif is present at residues 21–26; sequence GGGVRG. Positions 60–64 match the GXSXG motif; it reads GTSTG. Residue S62 is the Nucleophile of the active site. The active-site Proton acceptor is D205. The DGA/G motif lies at 205-207; that stretch reads DGG.

This sequence belongs to the patatin family.

In terms of biological role, possesses non-specific lipolytic acyl hydrolase (LAH) activity. Hydrolyzes phospholipids as well as galactolipids. May play a role in disease resistance. The polypeptide is Patatin-like protein 4 (PLP4) (Arabidopsis thaliana (Mouse-ear cress)).